The following is a 356-amino-acid chain: S-adenosylmethionine:tRNA ribosyltransferase-isomerase (356 aa).

It belongs to the QueA family. Monomer.

The protein localises to the cytoplasm. The enzyme catalyses 7-aminomethyl-7-carbaguanosine(34) in tRNA + S-adenosyl-L-methionine = epoxyqueuosine(34) in tRNA + adenine + L-methionine + 2 H(+). It participates in tRNA modification; tRNA-queuosine biosynthesis. In terms of biological role, transfers and isomerizes the ribose moiety from AdoMet to the 7-aminomethyl group of 7-deazaguanine (preQ1-tRNA) to give epoxyqueuosine (oQ-tRNA). This is S-adenosylmethionine:tRNA ribosyltransferase-isomerase from Xanthomonas oryzae pv. oryzae (strain KACC10331 / KXO85).